The chain runs to 194 residues: Ribonuclease HII (194 aa).

The 194-residue stretch at 1–194 folds into the RNase H type-2 domain; it reads MTVGVDEVGR…RLFPRDDGLR (194 aa). Residues aspartate 6, glutamate 7, and aspartate 102 each coordinate a divalent metal cation.

This sequence belongs to the RNase HII family. Mn(2+) is required as a cofactor. Requires Mg(2+) as cofactor.

Its subcellular location is the cytoplasm. It catalyses the reaction Endonucleolytic cleavage to 5'-phosphomonoester.. Its function is as follows. Endonuclease that specifically degrades the RNA of RNA-DNA hybrids. The polypeptide is Ribonuclease HII (Synechococcus sp. (strain WH7803)).